The following is a 70-amino-acid chain: NADH-ubiquinone oxidoreductase chain 3 (70 aa).

The chain crosses the membrane as a helical span at residues 42–62 (FFVITLIFLIFDVEIYLLLPM).

It belongs to the complex I subunit 3 family.

It localises to the mitochondrion membrane. The enzyme catalyses a ubiquinone + NADH + 5 H(+)(in) = a ubiquinol + NAD(+) + 4 H(+)(out). In terms of biological role, core subunit of the mitochondrial membrane respiratory chain NADH dehydrogenase (Complex I) that is believed to belong to the minimal assembly required for catalysis. Complex I functions in the transfer of electrons from NADH to the respiratory chain. The immediate electron acceptor for the enzyme is believed to be ubiquinone. The protein is NADH-ubiquinone oxidoreductase chain 3 (ND3) of Artemia salina (Brine shrimp).